An 877-amino-acid chain; its full sequence is MKKKLVLIDGSSVAYRAFFALPLLHNDKGIHTNAVYGFTMMLNKILAEEEPTHMLVAFDAGKTTFRHEAFQEYKGGRQQTPPELSEQFPLLRELLRAYRIPAYELENYEADDIIGTLAARAEQEGFEVKVISGDRDLTQLASPHVTVDITKKGITDIEPYTPEAVREKYGLTPEQIVDLKGLMGDKSDNIPGVPGIGEKTAVKLLRQFGTVENVLASIDEIKGEKLKETLRQHREMALLSKKLAAIRRDAPVELSLDDIAYQGEDREKVVALFKELGFQSFLEKMESPSSEEEKPLAKMAFTLADRVTEEMLADKAALVVEVVEENYHDAPIVGIAVVNEHGRFFLRPETALADPQFVAWLGDETKKKSMFDSKRAAVALKWKGIELCGVSFDLLLAAYLLDPAQGVDDVAAAAKMKQYEAVRPDEAVYGKGAKRAVPDEPVLAEHLVRKAAAIWALERPFLDELRRNEQDRLLVELEQPLSSILAEMEFAGVKVDTKRLEQMGEELAEQLRTVEQRIYELAGQEFNINSPKQLGVILFEKLQLPVLKKSKTGYSTSADVLEKLAPYHEIVENILQHYRQLGKLQSTYIEGLLKVVRPDTKKVHTIFNQALTQTGRLSSTEPNLQNIPIRLEEGRKIRQAFVPSESDWLIFAADYSQIELRVLAHIAEDDNLMEAFRRDLDIHTKTAMDIFQVSEDEVTPNMRRQAKAVNFGIVYGISDYGLAQNLNISRKEAAEFIERYFESFPGVKRYMENIVQEAKQKGYVTTLLHRRRYLPDITSRNFNVRSFAERMAMNTPIQGSAADIIKKAMIDLNARLKEERLQARLLLQVHDELILEAPKEEMERLCRLVPEVMEQAVTLRVPLKVDYHYGSTWYDAK.

Residues 1 to 310 (MKKKLVLIDG…FTLADRVTEE (310 aa)) form the 5'-3' exonuclease domain. The 3'-5' exonuclease domain occupies 311 to 465 (MLADKAALVV…ALERPFLDEL (155 aa)). Residues 469–877 (EQDRLLVELE…HYGSTWYDAK (409 aa)) are polymerase.

The protein belongs to the DNA polymerase type-A family. In terms of assembly, single-chain monomer with multiple functions.

The catalysed reaction is DNA(n) + a 2'-deoxyribonucleoside 5'-triphosphate = DNA(n+1) + diphosphate. Functionally, in addition to polymerase activity, this DNA polymerase exhibits 3'-5' and 5'-3' exonuclease activity. The chain is DNA polymerase I (polA) from Bacillus caldotenax.